The primary structure comprises 170 residues: NADPH-dependent 7-cyano-7-deazaguanine reductase (170 aa).

Cys58 serves as the catalytic Thioimide intermediate. The active-site Proton donor is the Asp65. Substrate is bound by residues 80 to 82 and 99 to 100; these read VES and HE.

Belongs to the GTP cyclohydrolase I family. QueF type 1 subfamily.

It is found in the cytoplasm. It catalyses the reaction 7-aminomethyl-7-carbaguanine + 2 NADP(+) = 7-cyano-7-deazaguanine + 2 NADPH + 3 H(+). The protein operates within tRNA modification; tRNA-queuosine biosynthesis. In terms of biological role, catalyzes the NADPH-dependent reduction of 7-cyano-7-deazaguanine (preQ0) to 7-aminomethyl-7-deazaguanine (preQ1). This is NADPH-dependent 7-cyano-7-deazaguanine reductase from Bdellovibrio bacteriovorus (strain ATCC 15356 / DSM 50701 / NCIMB 9529 / HD100).